A 361-amino-acid polypeptide reads, in one-letter code: MNQGANKTVLDRYLRLDIPDQKCQAMYIWVDGTGENLRSKTRTLNFTPKSPSELPIWNFDGSSTGQAERSNSDVYLYPVAVYRDPFRLGNNKLVLCETYKYNKKPADTNQRWKCMEVMTRAADQHPWFGMEQEYTLLDIDKHPLGWPKNGYPGPQGPYYCGVGANRVYGRDVVEAHYRACLCAGINISGENAKVMPAQWEFQVGPCEGITMGDDLWMARYLLHRVAEDFDVVVTLDPKPIPGDWNGAGMHTNFSTEAMRGPNGILEIESAIDKLSKVHEKHIKAYDPHAGKDNERRLTGHYETSSIHDFSAGVANRGASIRIPRGVAEEKTGYLEDRRPSSNADPYVVSERLVRTICLNEQ.

One can recognise a GS beta-grasp domain in the interval 23–103 (CQAMYIWVDG…VLCETYKYNK (81 aa)). The GS catalytic domain maps to 110–361 (QRWKCMEVMT…LVRTICLNEQ (252 aa)). Glutamate 131 provides a ligand contact to ATP. Mn(2+) is bound by residues glutamate 131, glutamate 133, and glutamate 200. 200-205 (EFQVGP) serves as a coordination point for ATP. Residue 243–244 (DW) participates in L-glutamate binding. Histidine 250 provides a ligand contact to Mn(2+). Residues 252-254 (NFS), arginine 316, and arginine 321 contribute to the ATP site. Residue arginine 316 coordinates L-glutamate. 333–335 (YLE) contributes to the ADP binding site. Glutamate 335 contributes to the Mn(2+) binding site. Arginine 337 serves as a coordination point for L-glutamate.

Belongs to the glutamine synthetase family. Requires Mg(2+) as cofactor. The cofactor is Mn(2+).

It localises to the cytoplasm. The protein localises to the cytosol. It is found in the microsome. The protein resides in the mitochondrion. The catalysed reaction is L-glutamate + NH4(+) + ATP = L-glutamine + ADP + phosphate + H(+). Glutamine synthetase that catalyzes the ATP-dependent conversion of glutamate and ammonia to glutamine. The protein is Glutamine synthetase of Panulirus argus (Caribbean spiny lobster).